A 470-amino-acid chain; its full sequence is Cell division protein FtsP (470 aa).

A signal peptide (tat-type signal) is located at residues 1–27 (MSLSRRQFIQASGIALCAGAVPLKASA). In terms of domain architecture, Plastocyanin-like spans 68–164 (WGINGRYLGP…NGLAGMWLVE (97 aa)).

This sequence belongs to the FtsP family. Post-translationally, exported by the Tat system. The position of the signal peptide cleavage has been experimentally proven. Can also be exported by the Sec system.

Its subcellular location is the periplasm. Cell division protein that is required for growth during stress conditions. May be involved in protecting or stabilizing the divisomal assembly under conditions of stress. In Escherichia coli (strain K12), this protein is Cell division protein FtsP.